Here is a 594-residue protein sequence, read N- to C-terminus: DNA ligase (594 aa).

Residue E280 coordinates ATP. K282 serves as the catalytic N6-AMP-lysine intermediate. Residues R287, R316, E345, F385, R456, and K462 each contribute to the ATP site.

It belongs to the ATP-dependent DNA ligase family. Mg(2+) serves as cofactor.

It carries out the reaction ATP + (deoxyribonucleotide)n-3'-hydroxyl + 5'-phospho-(deoxyribonucleotide)m = (deoxyribonucleotide)n+m + AMP + diphosphate.. Its function is as follows. DNA ligase that seals nicks in double-stranded DNA during DNA replication, DNA recombination and DNA repair. This is DNA ligase from Halorubrum lacusprofundi (strain ATCC 49239 / DSM 5036 / JCM 8891 / ACAM 34).